Here is a 169-residue protein sequence, read N- to C-terminus: Cell division inhibitor SulA (169 aa).

Residues 106–112 (ALRTGNY) form a ftsZ binding region. The interval 162 to 169 (KIHSNLYH) is lon protease binding.

Belongs to the SulA family. In terms of assembly, interacts with FtsZ. In terms of processing, is rapidly cleaved and degraded by the Lon protease once DNA damage is repaired.

In terms of biological role, component of the SOS system and an inhibitor of cell division. Accumulation of SulA causes rapid cessation of cell division and the appearance of long, non-septate filaments. In the presence of GTP, binds a polymerization-competent form of FtsZ in a 1:1 ratio, thus inhibiting FtsZ polymerization and therefore preventing it from participating in the assembly of the Z ring. This mechanism prevents the premature segregation of damaged DNA to daughter cells during cell division. This Salmonella agona (strain SL483) protein is Cell division inhibitor SulA.